A 267-amino-acid chain; its full sequence is Serine/arginine-rich splicing factor 7 (267 aa).

Residues 40–113 (TKVYVGNLGT…SRVRVELSTG (74 aa)) enclose the RRM domain. At lysine 53 the chain carries N6-acetyllysine; alternate. A Glycyl lysine isopeptide (Lys-Gly) (interchain with G-Cter in SUMO2); alternate cross-link involves residue lysine 53. Phosphoserine is present on serine 61. Residues 110 to 127 (LSTGMPRRSRFDRPPARR) form a sufficient for interaction with NXF1 region. A CCHC-type zinc finger spans residues 133–150 (DRCYECGEKGHYAYDCHR). Residues 152 to 209 (SRRRRSRSRSRSHSRSRGRRYSRSRSRSRGRRSRSASPRRSRSVSLRRSRSASLRRSR) show a composition bias toward basic residues. Residues 152–267 (SRRRRSRSRS…HRSASPERMD (116 aa)) form a disordered region. Tandem repeats lie at residues 182–189 (RRSRSASP), 190–197 (RRSRSVSL), 198–205 (RRSRSASL), and 206–213 (RRSRSGSI). A 6 X 8 AA repeats of R-R-S-R-S-X-S-X region spans residues 182-255 (RRSRSASPRR…SPKRSRSPSG (74 aa)). Phosphoserine occurs at positions 192, 194, and 196. 5 positions are modified to phosphoserine: serine 210, serine 212, serine 221, serine 223, and serine 225. Residues 223–251 (SRSRSRSRSISRPRSSRSKSRSPSPKRSR) show a composition bias toward basic residues. The stretch at 240 to 247 (SKSRSPSP) is one 5; approximate repeat. A 6; approximate repeat occupies 248–255 (KRSRSPSG). Phosphoserine occurs at positions 260 and 262.

This sequence belongs to the splicing factor SR family. Found in large molecular weight complexes containing CCNL1 and the p110 isoforms of either CDC2L1 or CDC2L2. Interacts with CCNL2 and CPSF6. Interacts with NXF1. Interacts with YTHDC1. Extensively phosphorylated on serine residues in the RS domain.

Its subcellular location is the nucleus. It localises to the cytoplasm. Its function is as follows. Required for pre-mRNA splicing. Represses the splicing of MAPT/Tau exon 10. May function as export adapter involved in mRNA nuclear export such as of histone H2A. Binds mRNA which is thought to be transferred to the NXF1-NXT1 heterodimer for export (TAP/NXF1 pathway); enhances NXF1-NXT1 RNA-binding activity. RNA-binding is semi-sequence specific. In Mus musculus (Mouse), this protein is Serine/arginine-rich splicing factor 7 (Srsf7).